The following is a 329-amino-acid chain: Malate dehydrogenase (329 aa).

12–18 (GAAGQIG) is an NAD(+) binding site. Substrate contacts are provided by Arg93 and Arg99. NAD(+) is bound by residues Asn106, Gln113, and 130–132 (TGN). Substrate contacts are provided by Asn132 and Arg163. His188 (proton acceptor) is an active-site residue.

The protein belongs to the LDH/MDH superfamily. MDH type 2 family.

The catalysed reaction is (S)-malate + NAD(+) = oxaloacetate + NADH + H(+). Catalyzes the reversible oxidation of malate to oxaloacetate. This chain is Malate dehydrogenase, found in Mycobacterium leprae (strain TN).